A 190-amino-acid polypeptide reads, in one-letter code: dTTP/UTP pyrophosphatase (190 aa).

Asp-68 acts as the Proton acceptor in catalysis.

This sequence belongs to the Maf family. YhdE subfamily. A divalent metal cation serves as cofactor.

The protein resides in the cytoplasm. The catalysed reaction is dTTP + H2O = dTMP + diphosphate + H(+). The enzyme catalyses UTP + H2O = UMP + diphosphate + H(+). In terms of biological role, nucleoside triphosphate pyrophosphatase that hydrolyzes dTTP and UTP. May have a dual role in cell division arrest and in preventing the incorporation of modified nucleotides into cellular nucleic acids. The sequence is that of dTTP/UTP pyrophosphatase from Acholeplasma laidlawii (strain PG-8A).